Consider the following 388-residue polypeptide: GTPase Obg (388 aa).

Residues 1–159 form the Obg domain; that stretch reads MKFVDEATIR…RSLRLELMLL (159 aa). In terms of domain architecture, OBG-type G spans 160-333; the sequence is ADVGLLGMPN…LALKLLDFID (174 aa). GTP-binding positions include 166–173, 191–195, 213–216, 283–286, and 314–316; these read GMPNAGKS, FTTLV, DIPG, NKAD, and SAY. Mg(2+) is bound by residues Ser-173 and Thr-193. The tract at residues 356–377 is disordered; that stretch reads QNANESVNEDYDDDLDDDDYDD. A compositionally biased stretch (acidic residues) spans 362 to 377; the sequence is VNEDYDDDLDDDDYDD.

This sequence belongs to the TRAFAC class OBG-HflX-like GTPase superfamily. OBG GTPase family. As to quaternary structure, monomer. Requires Mg(2+) as cofactor.

The protein resides in the cytoplasm. In terms of biological role, an essential GTPase which binds GTP, GDP and possibly (p)ppGpp with moderate affinity, with high nucleotide exchange rates and a fairly low GTP hydrolysis rate. Plays a role in control of the cell cycle, stress response, ribosome biogenesis and in those bacteria that undergo differentiation, in morphogenesis control. In Shewanella piezotolerans (strain WP3 / JCM 13877), this protein is GTPase Obg.